Here is a 202-residue protein sequence, read N- to C-terminus: Coiled-coil domain-containing protein 85B (202 aa).

An N-acetylmethionine modification is found at Met1. Coiled-coil stretches lie at residues 43-90 (GRLM…ERQR) and 118-147 (QKLA…LGEE). A disordered region spans residues 148-202 (WGPRGGPSGAGGSGAGPAPELALPPCGPRDLGDGSSSTGSVGSPDQLPLACSPDD). Residues 150 to 162 (PRGGPSGAGGSGA) show a composition bias toward gly residues. A compositionally biased stretch (low complexity) spans 180–190 (DGSSSTGSVGS).

Belongs to the CCDC85 family. Interacts with CEBPB. Interacts with EURL. May interact with CEBPD. Interacts with MCRS1. Interacts with TCF7L2; competes with CTNNB1. Interacts with ANKRD26. Interacts with the beta-catenin family proteins ARVCF, CTNND1, CTNND2 and PKP4. As to quaternary structure, (Microbial infection) Interacts with the viral phosphoprotein hepatitis delta antigen (HDAG); this interaction affects hepatitis delta virus (HDV) genomic replication in intact cells. In terms of tissue distribution, widely expressed including liver.

The protein localises to the nucleus. The protein resides in the cytoplasm. It localises to the cytoskeleton. It is found in the microtubule organizing center. Its subcellular location is the centrosome. The protein localises to the cell junction. The protein resides in the adherens junction. In terms of biological role, functions as a transcriptional repressor. May inhibit the activity of CTNNB1 in a TP53-dependent manner and thus regulate cell growth. May function in adipocyte differentiation, negatively regulating mitotic clonal expansion. Plays a role in cell-cell adhesion and epithelium development through its interaction with proteins of the beta-catenin family. Functionally, (Microbial infection) Plays a role in hepatitis delta virus (HDV) genomic replication. The protein is Coiled-coil domain-containing protein 85B (CCDC85B) of Homo sapiens (Human).